We begin with the raw amino-acid sequence, 486 residues long: E3 ubiquitin-protein ligase TRIM50 (486 aa).

The segment at 16-57 (CPVCLEVFKEPLMLQCGHSYCKGCLLSLSRHLDSELRCPVCR) adopts an RING-type zinc-finger fold. The B box-type zinc finger occupies 84–125 (PEPQVCTHHRNPLSLFCEKDQELICGLCGLLGSHQHHRVTPV). Cys89, His92, Cys111, and His117 together coordinate Zn(2+). Coiled coils occupy residues 125 to 170 (VSTV…ESDV) and 204 to 235 (LVAS…FGNE). A B30.2/SPRY domain is found at 275–474 (DIKLTVWKRL…LPMVLPLPSG (200 aa)). Lys372 is subject to N6-acetyllysine.

Belongs to the TRIM/RBCC family. In terms of assembly, can form dimers and trimers. Interacts with several E2 ubiquitin-conjugating enzymes, including UBE2L6, UBE2E1, UBE2E3. No interaction with UBE2H. Interacts with BECN1. Interacts with SQSTM1. Interacts with NLRP3. Post-translationally, auto-ubiquitinated. In terms of processing, acetylated by EP300 and KAT2B. HDAC6 drives TRIM50 deacetylation. Acetylation antagonizes with TRIM50 ubiquitination.

It is found in the cytoplasm. It catalyses the reaction S-ubiquitinyl-[E2 ubiquitin-conjugating enzyme]-L-cysteine + [acceptor protein]-L-lysine = [E2 ubiquitin-conjugating enzyme]-L-cysteine + N(6)-ubiquitinyl-[acceptor protein]-L-lysine.. Its function is as follows. E3 ubiquitin-protein ligase that ubiquitinates Beclin-1/BECN1 in a 'Lys-63'-dependent manner enhancing its binding to ULK1. In turn, promotes starvation-induced autophagy activation. Also interacts with p62/SQSTM1 protein and thereby induces the formation and the autophagy clearance of aggresome-associated polyubiquitinated proteins through HDAC6 interaction. Also promotes NLRP3 inflammasome activation by directly inducing NLRP3 oligomerization independent of its E3 ligase function. The chain is E3 ubiquitin-protein ligase TRIM50 (TRIM50) from Sus scrofa (Pig).